Consider the following 65-residue polypeptide: Large ribosomal subunit protein bL35 (65 aa).

The interval 1–52 (MPKMKSNRAAAKRFKRTANGGFKSGNSFTSHRFHGKTKKQRRQLRGLSMMDK) is disordered. Over residues 31-44 (HRFHGKTKKQRRQL) the composition is skewed to basic residues.

Belongs to the bacterial ribosomal protein bL35 family.

The sequence is that of Large ribosomal subunit protein bL35 from Limosilactobacillus reuteri (strain DSM 20016) (Lactobacillus reuteri).